The following is a 132-amino-acid chain: Small ribosomal subunit protein uS8 (132 aa).

The protein belongs to the universal ribosomal protein uS8 family. In terms of assembly, part of the 30S ribosomal subunit. Contacts proteins S5 and S12.

One of the primary rRNA binding proteins, it binds directly to 16S rRNA central domain where it helps coordinate assembly of the platform of the 30S subunit. This chain is Small ribosomal subunit protein uS8, found in Mycolicibacterium gilvum (strain PYR-GCK) (Mycobacterium gilvum (strain PYR-GCK)).